The primary structure comprises 185 residues: ATP-dependent protease subunit HslV (185 aa).

Residue T12 is part of the active site. 3 residues coordinate Na(+): S168, C171, and T174.

This sequence belongs to the peptidase T1B family. HslV subfamily. As to quaternary structure, a double ring-shaped homohexamer of HslV is capped on each side by a ring-shaped HslU homohexamer. The assembly of the HslU/HslV complex is dependent on binding of ATP.

It localises to the cytoplasm. It carries out the reaction ATP-dependent cleavage of peptide bonds with broad specificity.. Allosterically activated by HslU binding. Protease subunit of a proteasome-like degradation complex believed to be a general protein degrading machinery. The sequence is that of ATP-dependent protease subunit HslV from Jannaschia sp. (strain CCS1).